A 324-amino-acid polypeptide reads, in one-letter code: 1-deoxyxylulose-5-phosphate synthase YajO (324 aa).

Tyr61 (proton donor) is an active-site residue.

It belongs to the aldo/keto reductase family. Aldo/keto reductase 2 subfamily.

It carries out the reaction D-ribulose 5-phosphate + AH2 = 1-deoxy-D-xylulose 5-phosphate + A + H2O. NADH, NADPH or ATP do not increase activity. Its function is as follows. Catalyzes the conversion of ribulose 5-phosphate (Ru5P) to 1-deoxy-D-xylulose 5-phosphate (DXP), providing a direct route from pentoses to terpenes. May play a role in biosynthesis of DXP under conditions of thiamine starvation. This is 1-deoxyxylulose-5-phosphate synthase YajO (yajO) from Escherichia coli (strain K12).